The primary structure comprises 85 residues: Putative regulatory protein Dtur_1444 (85 aa).

This sequence belongs to the RemA family.

The sequence is that of Putative regulatory protein Dtur_1444 from Dictyoglomus turgidum (strain DSM 6724 / Z-1310).